The sequence spans 126 residues: Small nuclear ribonucleoprotein Sm D3 (126 aa).

Ser2 carries the N-acetylserine modification. Positions 5–77 constitute a Sm domain; that stretch reads VPIKVLHEAE…IRFLILPDML (73 aa). 5 repeat units span residues 110-111, 112-113, 114-115, 116-117, and 118-119. A 5 X 2 AA tandem repeats of [RM]-G; required for interaction with SMN1 region spans residues 110-119; the sequence is RGRGRGMGRG.

This sequence belongs to the snRNP core protein family. As to quaternary structure, core component of the spliceosomal U1, U2, U4 and U5 small nuclear ribonucleoproteins (snRNPs), the building blocks of the spliceosome. Most spliceosomal snRNPs contain a common set of Sm proteins, SNRPB, SNRPD1, SNRPD2, SNRPD3, SNRPE, SNRPF and SNRPG that assemble in a heptameric protein ring on the Sm site of the small nuclear RNA to form the core snRNP. Component of the U1 snRNP. The U1 snRNP is composed of the U1 snRNA and the 7 core Sm proteins SNRPB, SNRPD1, SNRPD2, SNRPD3, SNRPE, SNRPF and SNRPG, and at least three U1 snRNP-specific proteins SNRNP70/U1-70K, SNRPA/U1-A and SNRPC/U1-C. Component of the U4/U6-U5 tri-snRNP complex composed of the U4, U6 and U5 snRNAs and at least PRPF3, PRPF4, PRPF6, PRPF8, PRPF31, SNRNP200, TXNL4A, SNRNP40, SNRPB, SNRPD1, SNRPD2, SNRPD3, SNRPE, SNRPF, SNRPG, DDX23, CD2BP2, PPIH, SNU13, EFTUD2, SART1 and USP39, plus LSM2, LSM3, LSM4, LSM5, LSM6, LSM7 and LSM8. Component of the U7 snRNP complex, or U7 Sm protein core complex, that is composed of the U7 snRNA and at least LSM10, LSM11, SNRPB, SNRPD3, SNRPE, SNRPF and SNRPG; the complex does not contain SNRPD1 and SNRPD2. Component of the minor spliceosome, which splices U12-type introns. Part of the SMN-Sm complex that contains SMN1, GEMIN2/SIP1, DDX20/GEMIN3, GEMIN4, GEMIN5, GEMIN6, GEMIN7, GEMIN8, STRAP/UNRIP and the Sm proteins SNRPB, SNRPD1, SNRPD2, SNRPD3, SNRPE, SNRPF and SNRPG; catalyzes core snRNPs assembly. Forms a 6S pICln-Sm complex composed of CLNS1A/pICln, SNRPD1, SNRPD2, SNRPE, SNRPF and SNRPG; ring-like structure where CLNS1A/pICln mimics additional Sm proteins and which is unable to assemble into the core snRNP. Interacts (via C-terminus) with SMN1 (via Tudor domain); the interaction is direct. Post-translationally, methylated on arginine residues by PRMT5 and PRMT7; probable asymmetric dimethylation which is required for assembly and biogenesis of snRNPs.

It localises to the cytoplasm. It is found in the cytosol. The protein resides in the nucleus. Plays a role in pre-mRNA splicing as a core component of the spliceosomal U1, U2, U4 and U5 small nuclear ribonucleoproteins (snRNPs), the building blocks of the spliceosome. Component of both the pre-catalytic spliceosome B complex and activated spliceosome C complexes. As a component of the minor spliceosome, involved in the splicing of U12-type introns in pre-mRNAs. As part of the U7 snRNP it is involved in histone pre-mRNA 3'-end processing. In Homo sapiens (Human), this protein is Small nuclear ribonucleoprotein Sm D3 (SNRPD3).